A 165-amino-acid polypeptide reads, in one-letter code: Large ribosomal subunit protein uL10 (165 aa).

It belongs to the universal ribosomal protein uL10 family. Part of the ribosomal stalk of the 50S ribosomal subunit. The N-terminus interacts with L11 and the large rRNA to form the base of the stalk. The C-terminus forms an elongated spine to which L12 dimers bind in a sequential fashion forming a multimeric L10(L12)X complex.

Functionally, forms part of the ribosomal stalk, playing a central role in the interaction of the ribosome with GTP-bound translation factors. In Serratia proteamaculans (strain 568), this protein is Large ribosomal subunit protein uL10.